A 324-amino-acid chain; its full sequence is Alkanal monooxygenase beta chain (324 aa).

This sequence belongs to the bacterial luciferase oxidoreductase family. In terms of assembly, heterodimer of an alpha and a beta chain.

It carries out the reaction a long-chain fatty aldehyde + FMNH2 + O2 = a long-chain fatty acid + hnu + FMN + H2O + 2 H(+). Functionally, light-emitting reaction in luminous bacteria. The specific role of the beta subunit is unknown, but it is absolutely required for bioluminescence activity. The chain is Alkanal monooxygenase beta chain (luxB) from Vibrio harveyi (Beneckea harveyi).